A 126-amino-acid polypeptide reads, in one-letter code: Holo-[acyl-carrier-protein] synthase (126 aa).

The Mg(2+) site is built by D8 and E57.

The protein belongs to the P-Pant transferase superfamily. AcpS family. The cofactor is Mg(2+).

It localises to the cytoplasm. The enzyme catalyses apo-[ACP] + CoA = holo-[ACP] + adenosine 3',5'-bisphosphate + H(+). Transfers the 4'-phosphopantetheine moiety from coenzyme A to a Ser of acyl-carrier-protein. The protein is Holo-[acyl-carrier-protein] synthase of Halorhodospira halophila (strain DSM 244 / SL1) (Ectothiorhodospira halophila (strain DSM 244 / SL1)).